The primary structure comprises 349 residues: Hydrophobic dipeptide epimerase (349 aa).

Substrate is bound by residues Thr-127 and 153–155; that span reads KIK. Residues Asp-186, Glu-212, and Asp-237 each contribute to the Mg(2+) site. Residues Lys-259 and 309–311 each bind substrate; that span reads DLD.

The protein belongs to the mandelate racemase/muconate lactonizing enzyme family. Mg(2+) is required as a cofactor.

Catalyzes the epimerization a variety of hydrophobic dipeptides. Epimerase activity is highest with L-Ala-L-Tyr, and lower with L-Ala-L-Met, L-Ala-L-Phe, L-Tyr-L-Ala, L-Tyr-L-Met and L-Tyr-L-Trp (in vitro). The protein is Hydrophobic dipeptide epimerase of Flavobacteria bacterium (strain MS024-2A).